Consider the following 591-residue polypeptide: Proteasome-associated ATPase (591 aa).

Residues 10-77 (VAAAEELHAL…LREEVDRLGQ (68 aa)) are a coiled coil. 278 to 283 (GCGKTL) is a binding site for ATP. A docks into pockets in the proteasome alpha-ring region spans residues 590–591 (YL).

Belongs to the AAA ATPase family. Homohexamer. Assembles into a hexameric ring structure that likely caps the 20S proteasome core. Can form a complex composed of two stacked hexameric rings in vitro. Probably interacts with the prokaryotic ubiquitin-like protein Pup through a hydrophobic interface; the expected interacting region of ARC lies in its N-terminal coiled-coil domain. There is likely one Pup binding site per ARC hexamer ring. Upon ATP-binding, the C-terminus of ARC probably interacts with the alpha-rings of the proteasome core, possibly by binding to the intersubunit pockets.

The protein operates within protein degradation; proteasomal Pup-dependent pathway. Its activity is regulated as follows. ATPase activity is inhibited by N-ethylmaleimide (NEM) but not by sodium azide. ATPase which is responsible for recognizing, binding, unfolding and translocation of pupylated proteins into the bacterial 20S proteasome core particle. May be essential for opening the gate of the 20S proteasome via an interaction with its C-terminus, thereby allowing substrate entry and access to the site of proteolysis. Thus, the C-termini of the proteasomal ATPase may function like a 'key in a lock' to induce gate opening and therefore regulate proteolysis. The polypeptide is Proteasome-associated ATPase (Rhodococcus erythropolis (Arthrobacter picolinophilus)).